The primary structure comprises 547 residues: Chaperonin GroEL (547 aa).

ATP contacts are provided by residues T30 to P33, K51, D87 to T91, G415, N479 to A481, and D495.

It belongs to the chaperonin (HSP60) family. In terms of assembly, forms a cylinder of 14 subunits composed of two heptameric rings stacked back-to-back. Interacts with the co-chaperonin GroES.

It localises to the cytoplasm. The enzyme catalyses ATP + H2O + a folded polypeptide = ADP + phosphate + an unfolded polypeptide.. Together with its co-chaperonin GroES, plays an essential role in assisting protein folding. The GroEL-GroES system forms a nano-cage that allows encapsulation of the non-native substrate proteins and provides a physical environment optimized to promote and accelerate protein folding. This chain is Chaperonin GroEL, found in Pseudomonas savastanoi pv. phaseolicola (strain 1448A / Race 6) (Pseudomonas syringae pv. phaseolicola (strain 1448A / Race 6)).